Consider the following 303-residue polypeptide: Cysteine synthase B (303 aa).

Lys-41 carries the N6-(pyridoxal phosphate)lysine modification. Residues Asn-71, 174–178, and Ser-255 each bind pyridoxal 5'-phosphate; that span reads GTTGT.

It belongs to the cysteine synthase/cystathionine beta-synthase family. Pyridoxal 5'-phosphate serves as cofactor.

The enzyme catalyses O-acetyl-L-serine + hydrogen sulfide = L-cysteine + acetate. It participates in amino-acid biosynthesis; L-cysteine biosynthesis; L-cysteine from L-serine: step 2/2. Functionally, two cysteine synthase enzymes are found. Both catalyze the same reaction. Cysteine synthase B can also use thiosulfate in place of sulfide to give cysteine thiosulfonate as a product. The polypeptide is Cysteine synthase B (cysM) (Salmonella typhimurium (strain LT2 / SGSC1412 / ATCC 700720)).